Here is a 114-residue protein sequence, read N- to C-terminus: uncharacterized protein (114 aa).

The 109-residue stretch at 6 to 114 folds into the HIT domain; it reads IFGKIIRREI…GGRSLAWPPG (109 aa). The Histidine triad motif motif lies at 98 to 102; the sequence is HLHIH.

This is an uncharacterized protein from Synechococcus elongatus (strain ATCC 33912 / PCC 7942 / FACHB-805) (Anacystis nidulans R2).